The chain runs to 557 residues: MVSKLTSLQQELLSALLSSGVTKEVLVQALEELLPSPNFGVKLETLPLSPGSGAEPDTKPVFHTLTNGHAKGRLSGDEGSEDGDDYDTPPILKELQALNTEEAAEQRAEVDRMLSEDPWRAAKMIKGYMQQHNIPQREVVDVTGLNQSHLSQHLNKGTPMKTQKRAALYTWYVRKQREILRQFNQTVQSSGNMTDKSSQDQLLFLFPEFSQQSHGPGQSDDACSEPTNKKMRRNRFKWGPASQQILYQAYDRQKNPSKEEREALVEECNRAECLQRGVSPSKAHGLGSNLVTEVRVYNWFANRRKEEAFRQKLAMDAYSSNQTHSLNPLLSHGSPHHQPSSSPPNKLSGVRYSQQGNNEITSSSTISHHGNSAMVTSQSVLQQVSPASLDPGHNLLSPDGKMISVSGGGLPPVSTLTNIHSLSHHNPQQSQNLIMTPLSGVMAIAQSLNTSQAQSVPVINSVAGSLAALQPVQFSQQLHSPHQQPLMQQSPGSHMAQQPFMAAVTQLQNSHMYAHKQEPPQYSHTSRFPSAMVVTDTSSISTLTNMSSSKQCPLQAW.

Residues 1–31 (MVSKLTSLQQELLSALLSSGVTKEVLVQALE) are dimerization. An HNF-p1 domain is found at 1–32 (MVSKLTSLQQELLSALLSSGVTKEVLVQALEE). 4 positions are modified to phosphoserine: S49, S52, S75, and S80. Residues 64-85 (TLTNGHAKGRLSGDEGSEDGDD) form a disordered region. Positions 93 to 188 (KELQALNTEE…ILRQFNQTVQ (96 aa)) constitute a POU-specific atypical domain. Residues 231–311 (MRRNRFKWGP…NRRKEEAFRQ (81 aa)) constitute a DNA-binding region (homeobox; HNF1-type). The disordered stretch occupies residues 324–352 (HSLNPLLSHGSPHHQPSSSPPNKLSGVRY). Residues 328–344 (PLLSHGSPHHQPSSSPP) are compositionally biased toward low complexity.

It belongs to the HNF1 homeobox family. As to quaternary structure, binds DNA as a dimer. Can form homodimer or heterodimer with HNF1-alpha. Interacts (via HNF-p1 domain) with PCBD1; the interaction increases its transactivation activity.

The protein resides in the nucleus. Functionally, transcription factor that binds to the inverted palindrome 5'-GTTAATNATTAAC-3'. Binds to the FPC element in the cAMP regulatory unit of the PLAU gene. Transcriptional activity is increased by coactivator PCBD1. The polypeptide is Hepatocyte nuclear factor 1-beta (HNF1B) (Homo sapiens (Human)).